The primary structure comprises 274 residues: uncharacterized protein (274 aa).

Transmembrane regions (helical) follow at residues 9-29 (SLLL…VSIL), 64-84 (WFWH…FFIL), 135-155 (LAGH…ALLL), 165-185 (MSSM…WQNA), and 219-239 (IIVY…LVLG).

It belongs to the steroid 5-alpha reductase family.

The protein localises to the endoplasmic reticulum membrane. This is an uncharacterized protein from Schizosaccharomyces pombe (strain 972 / ATCC 24843) (Fission yeast).